A 500-amino-acid chain; its full sequence is L-arabinose isomerase (500 aa).

The Mn(2+) site is built by E306, E333, H350, and H450.

It belongs to the arabinose isomerase family. Homohexamer. It depends on Mn(2+) as a cofactor.

The enzyme catalyses beta-L-arabinopyranose = L-ribulose. Its pathway is carbohydrate degradation; L-arabinose degradation via L-ribulose; D-xylulose 5-phosphate from L-arabinose (bacterial route): step 1/3. Its function is as follows. Catalyzes the conversion of L-arabinose to L-ribulose. The protein is L-arabinose isomerase of Yersinia pestis bv. Antiqua (strain Nepal516).